The sequence spans 184 residues: Ribosome-recycling factor (184 aa).

The protein belongs to the RRF family.

Its subcellular location is the cytoplasm. Its function is as follows. Responsible for the release of ribosomes from messenger RNA at the termination of protein biosynthesis. May increase the efficiency of translation by recycling ribosomes from one round of translation to another. In Acholeplasma laidlawii (strain PG-8A), this protein is Ribosome-recycling factor.